Here is a 227-residue protein sequence, read N- to C-terminus: Charged multivesicular body protein 4c (227 aa).

Residues 1–27 form a disordered region; it reads MSKITKLFKSSGGSGSSSKNRKGPSAQ. 2 coiled-coil regions span residues 32-94 and 129-187; these read KLRE…STIE and LEKI…MANV. Positions 178–227 are disordered; that stretch reads EDLNSQMANVNLPSVPSSKLPSTKLPSRPASSRKKVEDDDDMQMLAAWAT. Over residues 189–206 the composition is skewed to low complexity; sequence LPSVPSSKLPSTKLPSRP.

Belongs to the SNF7 family. As to quaternary structure, probable core component of the endosomal sorting required for transport complex III (ESCRT-III). ESCRT-III components are thought to multimerize to form a flat lattice on the perimeter membrane of the endosome.

The protein localises to the cytoplasm. It is found in the cytosol. It localises to the late endosome membrane. Functionally, probable core component of the endosomal sorting required for transport complex III (ESCRT-III) which is involved in multivesicular bodies (MVBs) formation and sorting of endosomal cargo proteins into MVBs. MVBs contain intraluminal vesicles (ILVs) that are generated by invagination and scission from the limiting membrane of the endosome and mostly are delivered to lysosomes enabling degradation of membrane proteins, such as stimulated growth factor receptors, lysosomal enzymes and lipids. Key component of the cytokinesis checkpoint, a process required to delay abscission to prevent both premature resolution of intercellular chromosome bridges and accumulation of DNA damage. This chain is Charged multivesicular body protein 4c (chmp4c), found in Xenopus laevis (African clawed frog).